The primary structure comprises 751 residues: MSNESKCPFHQTAGGGTTNRDWWPDQLNLRILHQHSSKSSPDPDFDYAKAFKSLDFQALKKDLTALMTDSQDWWPADFGHYGPLFIRMAWHSAGTYRIGDGRGGAGSGQQRFAPLNSWPDNVSLDKARRLLWPIKQKYGNKISWADLIVLTGNVALESMGFKTFGFSGGRADVWEPDEDVYWGSEKVWLGGDTRYGKDQVKAQPPGQGDLVAEPAKHGEEQNRDLSAERNLENPLAAVQMGLIYVNPEGPEGNPDPVASGKDIRETFGRMAMNDEETVALIAGGHAFGKTHGAGPADNVGPEPEAAGLEMQGLGWHNTFGSGKGGDTITSGLEVTWTSTPTRWSNEYLNNLFDFEWELTKSPAGAHQWRPKEGKGAGTVPDAHDPGKKHAPSMLTSDLALRFDPIYAPIARRFKDNPEQLADAFARAWYKLIHRDMGPLARYLGPEMPNEELLWQDPLPKADPSTISEQDIATLKSRILASGLSVGELVSTAWASASTFRGSDKRGGANGARLRLAPQKDWAANQGVDKVLAALEKIRGEFNNGGKKVSLADLIVLAGTAAVEKAAKDAGYSGSVGFRPGRVDASQEQTDVESFAVLEPLADGFRNFTKARYSVKAEKLLLDKAQLLTLTAPELTVLIGGLRVLGANHGGSNLGVFTDKPGTLSNDFFRNLLDMSVEWKPTSADNETFEGRDRKTGQVKWSGSRVDLVFGSHAQLRALSEVYGSSDGGDKFVRDFVAAWQKVMELDRFDLK.

Positions 1-21 (MSNESKCPFHQTAGGGTTNRD) are disordered. The segment at residues 90 to 244 (WHSAGTYRIG…LAAVQMGLIY (155 aa)) is a cross-link (tryptophyl-tyrosyl-methioninium (Trp-Tyr) (with M-270)). The active-site Proton acceptor is His91. The interval 195–227 (YGKDQVKAQPPGQGDLVAEPAKHGEEQNRDLSA) is disordered. Residues 214-227 (PAKHGEEQNRDLSA) show a composition bias toward basic and acidic residues. The segment at residues 244–270 (YVNPEGPEGNPDPVASGKDIRETFGRM) is a cross-link (tryptophyl-tyrosyl-methioninium (Tyr-Met) (with W-90)). His285 contacts heme b. Residues 365–387 (AHQWRPKEGKGAGTVPDAHDPGK) are disordered.

It belongs to the peroxidase family. Peroxidase/catalase subfamily. In terms of assembly, homodimer or homotetramer. Heme b is required as a cofactor. Post-translationally, formation of the three residue Trp-Tyr-Met cross-link is important for the catalase, but not the peroxidase activity of the enzyme.

It carries out the reaction H2O2 + AH2 = A + 2 H2O. It catalyses the reaction 2 H2O2 = O2 + 2 H2O. Functionally, bifunctional enzyme with both catalase and broad-spectrum peroxidase activity. The chain is Catalase-peroxidase from Pseudomonas putida (strain ATCC 700007 / DSM 6899 / JCM 31910 / BCRC 17059 / LMG 24140 / F1).